The following is a 557-amino-acid chain: Dihydroxy-acid dehydratase (557 aa).

Asp78 provides a ligand contact to Mg(2+). Cys119 is a [2Fe-2S] cluster binding site. Residues Asp120 and Lys121 each coordinate Mg(2+). At Lys121 the chain carries N6-carboxylysine. Cys192 is a [2Fe-2S] cluster binding site. Residue Glu442 participates in Mg(2+) binding. Ser468 serves as the catalytic Proton acceptor.

This sequence belongs to the IlvD/Edd family. Homodimer. [2Fe-2S] cluster is required as a cofactor. Mg(2+) serves as cofactor.

It catalyses the reaction (2R)-2,3-dihydroxy-3-methylbutanoate = 3-methyl-2-oxobutanoate + H2O. The catalysed reaction is (2R,3R)-2,3-dihydroxy-3-methylpentanoate = (S)-3-methyl-2-oxopentanoate + H2O. The protein operates within amino-acid biosynthesis; L-isoleucine biosynthesis; L-isoleucine from 2-oxobutanoate: step 3/4. It functions in the pathway amino-acid biosynthesis; L-valine biosynthesis; L-valine from pyruvate: step 3/4. Functionally, functions in the biosynthesis of branched-chain amino acids. Catalyzes the dehydration of (2R,3R)-2,3-dihydroxy-3-methylpentanoate (2,3-dihydroxy-3-methylvalerate) into 2-oxo-3-methylpentanoate (2-oxo-3-methylvalerate) and of (2R)-2,3-dihydroxy-3-methylbutanoate (2,3-dihydroxyisovalerate) into 2-oxo-3-methylbutanoate (2-oxoisovalerate), the penultimate precursor to L-isoleucine and L-valine, respectively. The sequence is that of Dihydroxy-acid dehydratase from Bacillus cereus (strain AH187).